The primary structure comprises 89 residues: MALSVEEKAQIVAEYQQAAGDTGSPEVQVALLTANINKLQGHFKANDKDHHSRRGLIRMVNQRRKLLDYLKGKDTTRYSALIGRLGLRR.

It belongs to the universal ribosomal protein uS15 family. As to quaternary structure, part of the 30S ribosomal subunit. Forms a bridge to the 50S subunit in the 70S ribosome, contacting the 23S rRNA.

Functionally, one of the primary rRNA binding proteins, it binds directly to 16S rRNA where it helps nucleate assembly of the platform of the 30S subunit by binding and bridging several RNA helices of the 16S rRNA. Its function is as follows. Forms an intersubunit bridge (bridge B4) with the 23S rRNA of the 50S subunit in the ribosome. This Pseudomonas putida (strain ATCC 700007 / DSM 6899 / JCM 31910 / BCRC 17059 / LMG 24140 / F1) protein is Small ribosomal subunit protein uS15.